The sequence spans 181 residues: Peptide deformylase 2 (181 aa).

Residues Cys109 and His151 each coordinate Fe cation. Glu152 is an active-site residue. A Fe cation-binding site is contributed by His155.

This sequence belongs to the polypeptide deformylase family. Fe(2+) serves as cofactor.

The catalysed reaction is N-terminal N-formyl-L-methionyl-[peptide] + H2O = N-terminal L-methionyl-[peptide] + formate. In terms of biological role, removes the formyl group from the N-terminal Met of newly synthesized proteins. Requires at least a dipeptide for an efficient rate of reaction. N-terminal L-methionine is a prerequisite for activity but the enzyme has broad specificity at other positions. This Shewanella oneidensis (strain ATCC 700550 / JCM 31522 / CIP 106686 / LMG 19005 / NCIMB 14063 / MR-1) protein is Peptide deformylase 2.